A 237-amino-acid polypeptide reads, in one-letter code: Germination-specific N-acetylmuramoyl-L-alanine amidase (237 aa).

Positions 1-27 (MRKKLKWLSFLLGFIILLFLFKYQFSN) are cleaved as a signal peptide. The region spanning 43 to 226 (IYLDPGHGGP…VASSIYKGIL (184 aa)) is the MurNAc-LAA domain.

The protein belongs to the N-acetylmuramoyl-L-alanine amidase 3 family.

The protein localises to the secreted. The catalysed reaction is Hydrolyzes the link between N-acetylmuramoyl residues and L-amino acid residues in certain cell-wall glycopeptides.. Its function is as follows. Cleaves the peptide side chain from the N-acetylmuramic acid residues in peptidoglycan. This is a step in the formation of muramic delta-lactam residues in spore cortex. This Bacillus subtilis (strain 168) protein is Germination-specific N-acetylmuramoyl-L-alanine amidase (cwlD).